A 519-amino-acid chain; its full sequence is Arabinose import ATP-binding protein AraG 2 (519 aa).

ABC transporter domains lie at 29 to 264 (LSLD…MVGR) and 264 to 515 (RSIE…LIKL). Position 61-68 (61-68 (GENGAGKS)) interacts with ATP.

The protein belongs to the ABC transporter superfamily. Arabinose importer (TC 3.A.1.2.2) family. The complex is composed of two ATP-binding proteins (AraG), two transmembrane proteins (AraH) and a solute-binding protein (AraF).

It localises to the cell inner membrane. It catalyses the reaction L-arabinose(out) + ATP + H2O = L-arabinose(in) + ADP + phosphate + H(+). Its function is as follows. Part of the ABC transporter complex AraFGH involved in arabinose import. Responsible for energy coupling to the transport system. In Burkholderia ambifaria (strain ATCC BAA-244 / DSM 16087 / CCUG 44356 / LMG 19182 / AMMD) (Burkholderia cepacia (strain AMMD)), this protein is Arabinose import ATP-binding protein AraG 2.